The sequence spans 591 residues: Serine/threonine-protein kinase Nek2 (591 aa).

The Protein kinase domain maps to Tyr4–Leu258. Residues Ile10–Ala18 and Lys33 each bind ATP. Asp129 acts as the Proton acceptor in catalysis. Disordered stretches follow at residues Leu309–Arg331, Glu387–Asn408, and Arg500–Ser534. 2 stretches are compositionally biased toward polar residues: residues Thr391 to Asn408 and Asp504 to Ser534.

The protein belongs to the protein kinase superfamily. NEK Ser/Thr protein kinase family. NIMA subfamily.

It catalyses the reaction L-seryl-[protein] + ATP = O-phospho-L-seryl-[protein] + ADP + H(+). The enzyme catalyses L-threonyl-[protein] + ATP = O-phospho-L-threonyl-[protein] + ADP + H(+). May be involved in plant development processes. In Oryza sativa subsp. indica (Rice), this protein is Serine/threonine-protein kinase Nek2 (NEK2).